Reading from the N-terminus, the 113-residue chain is Thioredoxin H-type (113 aa).

The Thioredoxin domain maps to 2 to 112 (GGSVIVIDSK…LKALVAKHAA (111 aa)). Catalysis depends on nucleophile residues Cys37 and Cys40. A disulfide bridge connects residues Cys37 and Cys40.

The protein belongs to the thioredoxin family. Plant H-type subfamily.

It is found in the cytoplasm. Functionally, participates in various redox reactions through the reversible oxidation of the active center dithiol to a disulfide. The H form is known to activate a number of cytosolic enzymes. The chain is Thioredoxin H-type (TRXH) from Chlamydomonas reinhardtii (Chlamydomonas smithii).